Reading from the N-terminus, the 344-residue chain is GTP 3',8-cyclase (344 aa).

Residues 19 to 239 (PFGRTIDYLR…ANYTLTDLPD (221 aa)) enclose the Radical SAM core domain. R28 is a GTP binding site. Residues C35 and C39 each coordinate [4Fe-4S] cluster. Y41 contributes to the S-adenosyl-L-methionine binding site. C42 contacts [4Fe-4S] cluster. R77 lines the GTP pocket. G81 is a binding site for S-adenosyl-L-methionine. T111 is a GTP binding site. S-adenosyl-L-methionine is bound at residue S135. K171 lines the GTP pocket. Residue M205 participates in S-adenosyl-L-methionine binding. Residues C268 and C271 each coordinate [4Fe-4S] cluster. 273 to 275 (RVR) serves as a coordination point for GTP. C285 is a binding site for [4Fe-4S] cluster.

The protein belongs to the radical SAM superfamily. MoaA family. As to quaternary structure, monomer and homodimer. Requires [4Fe-4S] cluster as cofactor.

The enzyme catalyses GTP + AH2 + S-adenosyl-L-methionine = (8S)-3',8-cyclo-7,8-dihydroguanosine 5'-triphosphate + 5'-deoxyadenosine + L-methionine + A + H(+). It participates in cofactor biosynthesis; molybdopterin biosynthesis. In terms of biological role, catalyzes the cyclization of GTP to (8S)-3',8-cyclo-7,8-dihydroguanosine 5'-triphosphate. The protein is GTP 3',8-cyclase of Rhodopseudomonas palustris (strain TIE-1).